Consider the following 217-residue polypeptide: Large ribosomal subunit protein uL3 (217 aa).

The protein belongs to the universal ribosomal protein uL3 family. In terms of assembly, part of the 50S ribosomal subunit. Forms a cluster with proteins L14 and L19.

One of the primary rRNA binding proteins, it binds directly near the 3'-end of the 23S rRNA, where it nucleates assembly of the 50S subunit. The sequence is that of Large ribosomal subunit protein uL3 from Mycobacterium ulcerans (strain Agy99).